Here is a 265-residue protein sequence, read N- to C-terminus: Bradykinin-potentiating and C-type natriuretic peptides (265 aa).

A signal peptide spans 1–23 (MVLSRLAASGLLLLALLALSVDG). Positions 24-30 (KPVQQWA) are excised as a propeptide. Position 31 is a pyrrolidone carboxylic acid (Gln31). The propeptide occupies 44-50 (LKVQQWA). At Gln51 the chain carries Pyrrolidone carboxylic acid. Residues 64–70 (LTVQQWA) constitute a propeptide that is removed on maturation. Position 71 is a pyrrolidone carboxylic acid (Gln71). A propeptide spanning residues 81–87 (LTVQQWA) is cleaved from the precursor. Gln88 carries the pyrrolidone carboxylic acid modification. The propeptide occupies 100 to 106 (LEVQQWA). Gln107 bears the Pyrrolidone carboxylic acid mark. Positions 118–120 (APL) are excised as a propeptide. Gln121 bears the Pyrrolidone carboxylic acid mark. A propeptide is located at residue Val126. Gln127 carries the post-translational modification Pyrrolidone carboxylic acid. Residues 132–241 (LLQPHESPAS…GGARRLKGLA (110 aa)) constitute a propeptide that is removed on maturation. Residues 153 to 211 (GPEAASGVPSAGAEVGRSGSKAPAAPHRLSKSKGAAATSAASRPMRDLRPDGKQARQNW) form a disordered region. The segment covering 184–194 (SKGAAATSAAS) has biased composition (low complexity). Positions 196–206 (PMRDLRPDGKQ) are enriched in basic and acidic residues. An intrachain disulfide couples Cys249 to Cys265.

The protein in the N-terminal section; belongs to the bradykinin-potentiating peptide family. It in the C-terminal section; belongs to the natriuretic peptide family. In terms of tissue distribution, expressed by the venom gland.

The protein resides in the secreted. It localises to the cytoplasm. The protein localises to the cytosol. Modestly inhibits ACE (with highest affinity for the N-site) and reveals strong bradykinin-potentiating activity. Induces nitric oxide (NO) production depended on muscarinic acetylcholine receptor M1 subtype (CHRM1) and bradykinin B2 receptor (BDKRB2) activation. Both these receptors contribute to the vasodilation induced by this peptide that may have an indirect action on BDKRB2 and a direct agonistic action on CHRM1. Functionally, peptide with several activities. It inhibits the activity of the angiotensin-converting enzyme (ACE) by a preferential interaction with its C-domain. It evokes transient hypotension (-14 mmHg) similar to that evoked by 0.5 ug of bradykinin, when injected alone into rats. It has a high bradykinin-potentiating effect (120%), when 60 nmol of BPP-10c are coinjected with 0.5 ug of bradykinin into rats. Does not affect angiotensin-1 pressor effects. Shows potent and long-lasting antihypertensive activity as well as a reduction of the heart rate. It also binds and dose-dependently promotes the activation of cytosolic argininosuccinate synthase (ASS1), an enzyme that catalyzes the conversion of citrulline, L-aspartate and ATP to argininosuccinate, AMP and pyrophosphate. It also enhances ASS1-dependent arginine production in HEK 293 cells, as well as in spontaneous hypertensive rat (SHR) and Wistar rat plasma. In addition, it induces the production of nitric-oxide (NO) by HUVEC cells via the endothelial nitric-oxide synthase (NOS3), which use arginine as a substrate and produce NO. It has been shown to be internalized by ASS1-expressing endothelial (HUVEC) and kidney (HEK 293) cells, and is detected homogenously distributed within the cell cytoplasm for up to 2 hours. Its function is as follows. has a vasorelaxant activity in rat aortic strips and a diuretic potency in anesthetized rats. May act by activating natriuretic receptors (NPR1 and/or NPR2). The sequence is that of Bradykinin-potentiating and C-type natriuretic peptides from Bothrops insularis (Golden lancehead).